The primary structure comprises 555 residues: GPI-anchor transamidase component PIGS (555 aa).

At Ala2–Arg18 the chain is on the cytoplasmic side. Arg15 and Arg18 together coordinate a cardiolipin. The helical transmembrane segment at Ala19–Thr39 threads the bilayer. At Glu40–Gln517 the chain is on the lumenal side. N-linked (GlcNAc...) asparagine glycans are attached at residues Asn267 and Asn370. The helical transmembrane segment at Lys518–Pro532 threads the bilayer. Topologically, residues Ile533–Asp555 are cytoplasmic.

Belongs to the PIGS family. In terms of assembly, heteropentamer. Part of the GPI-anchor transamidase complex, consisting of PIGK, PIGT, PIGS, PIGU and GAA1.

The protein resides in the endoplasmic reticulum membrane. It participates in glycolipid biosynthesis; glycosylphosphatidylinositol-anchor biosynthesis. Component of the glycosylphosphatidylinositol-anchor (GPI-anchor) transamidase (GPI-T) complex that catalyzes the formation of the linkage between a proprotein and a GPI-anchor and participates in GPI anchored protein biosynthesis. The protein is GPI-anchor transamidase component PIGS of Homo sapiens (Human).